The chain runs to 1399 residues: Dicer-like protein 2 (1399 aa).

The Helicase ATP-binding domain occupies 18-194; sequence MVEESMQSNI…EDLQQIERNL (177 aa). Residue 31 to 38 participates in ATP binding; sequence MDTGSGKT. Residues 139 to 142 carry the DEAH box motif; that stretch reads DEAH. Residues 364–549 form the Helicase C-terminal domain; sequence KLQLLIKFLV…QSETGHRNFE (186 aa). One can recognise a Dicer dsRNA-binding fold domain in the interval 562-656; sequence ASQHLHHFCS…LPARQEADDE (95 aa). RNase III domains follow at residues 897–1054 and 1094–1270; these read LPSI…TVGG and LDVL…IDSL. Positions 1133, 1256, and 1259 each coordinate Mg(2+). A DRBM domain is found at 1301–1370; sequence HPKERLGHLA…AWKAVGVLES (70 aa).

This sequence belongs to the helicase family. Dicer subfamily. Requires Mg(2+) as cofactor. Mn(2+) is required as a cofactor.

Functionally, dicer-like endonuclease involved in cleaving double-stranded RNA in the RNA interference (RNAi) pathway. Produces 21 to 25 bp dsRNAs (siRNAs) which target the selective destruction of homologous RNAs leading to sequence-specific suppression of gene expression, called post-transcriptional gene silencing (PTGS). Part of a broad host defense response against viral infection and transposons. This Phaeosphaeria nodorum (strain SN15 / ATCC MYA-4574 / FGSC 10173) (Glume blotch fungus) protein is Dicer-like protein 2 (DCL2).